The following is a 41-amino-acid chain: Maticotoxin A (41 aa).

Intrachain disulfides connect C3–C22 and C15–C39.

The protein belongs to the three-finger toxin family. Short-chain subfamily. In terms of tissue distribution, expressed by the venom gland.

The protein localises to the secreted. The chain is Maticotoxin A from Calliophis bivirgatus (Blue Malaysian coral snake).